Reading from the N-terminus, the 511-residue chain is Tyrosine--tRNA ligase, chloroplastic/mitochondrial (511 aa).

Tyrosine 118 lines the L-tyrosine pocket. Aspartate 122 lines the ATP pocket. The 'HIGH' region signature appears at proline 123–asparagine 132. Residues aspartate 162, tyrosine 256, glutamine 260, aspartate 263, and glutamine 282 each coordinate L-tyrosine. The 'KMSKS' region motif lies at lysine 318 to serine 322. Residue lysine 321 coordinates ATP. The 67-residue stretch at leucine 444–isoleucine 510 folds into the S4 RNA-binding domain.

The protein belongs to the class-I aminoacyl-tRNA synthetase family.

It is found in the plastid. The protein resides in the chloroplast. The protein localises to the mitochondrion. The enzyme catalyses tRNA(Tyr) + L-tyrosine + ATP = L-tyrosyl-tRNA(Tyr) + AMP + diphosphate + H(+). In terms of biological role, catalyzes the attachment of tyrosine to tRNA(Tyr) in a two-step reaction: tyrosine is first activated by ATP to form Tyr-AMP and then transferred to the acceptor end of tRNA(Tyr). The chain is Tyrosine--tRNA ligase, chloroplastic/mitochondrial from Arabidopsis thaliana (Mouse-ear cress).